A 321-amino-acid chain; its full sequence is CRISPR-associated endonuclease Cas1 2 (321 aa).

Mn(2+)-binding residues include E150, H213, and E228.

The protein belongs to the CRISPR-associated endonuclease Cas1 family. Homodimer, forms a heterotetramer with a Cas2 homodimer. Mg(2+) is required as a cofactor. Requires Mn(2+) as cofactor.

In terms of biological role, CRISPR (clustered regularly interspaced short palindromic repeat), is an adaptive immune system that provides protection against mobile genetic elements (viruses, transposable elements and conjugative plasmids). CRISPR clusters contain spacers, sequences complementary to antecedent mobile elements, and target invading nucleic acids. CRISPR clusters are transcribed and processed into CRISPR RNA (crRNA). Acts as a dsDNA endonuclease. Involved in the integration of spacer DNA into the CRISPR cassette. The chain is CRISPR-associated endonuclease Cas1 2 from Moorella thermoacetica (strain ATCC 39073 / JCM 9320).